Reading from the N-terminus, the 883-residue chain is EEF1AKMT4-ECE2 readthrough transcript protein (883 aa).

A methyltransferase-like region region spans residues 1–160 (MASPGAGRAP…VHTVDQVLSE (160 aa)). Residues 1–178 (MASPGAGRAP…QLLGSRTQLE (178 aa)) lie on the Cytoplasmic side of the membrane. Residues Trp-26 and Tyr-30 each contribute to the S-adenosyl-L-methionine site. A Phosphotyrosine modification is found at Tyr-39. S-adenosyl-L-methionine-binding positions include Trp-41, Gly-66, 88 to 89 (DY), 113 to 114 (DV), and Lys-130. A helical membrane pass occupies residues 179–199 (LVLAGASLLLAALLLGCLVAL). The Lumenal portion of the chain corresponds to 200–883 (GVQYHRDPSH…MNPGQLCEVW (684 aa)). The 673-residue stretch at 211 to 883 (TCLTEACIRV…MNPGQLCEVW (673 aa)) folds into the Peptidase M13 domain. 5 disulfides stabilise this stretch: Cys-212-Cys-217, Cys-235-Cys-868, Cys-243-Cys-828, Cys-299-Cys-548, and Cys-757-Cys-880. Residues Asn-279, Asn-283, Asn-324, Asn-384, Asn-429, Asn-496, and Asn-652 are each glycosylated (N-linked (GlcNAc...) asparagine). His-720 is a binding site for Zn(2+). The active site involves Glu-721. A Zn(2+)-binding site is contributed by His-724. 2 N-linked (GlcNAc...) asparagine glycosylation sites follow: Asn-745 and Asn-753. Glu-780 is a binding site for Zn(2+). The active-site Proton donor is Asp-784.

In the N-terminal section; belongs to the methyltransferase superfamily. It in the C-terminal section; belongs to the peptidase M13 family. Zn(2+) is required as a cofactor.

The protein resides in the golgi apparatus membrane. It localises to the cytoplasmic vesicle. The protein localises to the secretory vesicle membrane. It catalyses the reaction Hydrolysis of the 21-Trp-|-Val-22 bond in big endothelin to form endothelin 1.. With respect to regulation, inhibited by phosphoramidon. Converts big endothelin-1 to endothelin-1. May also have methyltransferase activity. May play a role in amyloid-beta processing. This chain is EEF1AKMT4-ECE2 readthrough transcript protein, found in Homo sapiens (Human).